The chain runs to 67 residues: Probable pilin MJ1400 (67 aa).

The propeptide occupies Met1–Gly13. The short motif at Gln14 to Leu22 is the QXSXEXXXL element.

In terms of processing, the N-terminus is cleaved by the prepilin peptidase EppA, which recognizes the class III signal sequence.

It localises to the secreted. It is found in the cell surface. Its subcellular location is the fimbrium. The protein is Probable pilin MJ1400 of Methanocaldococcus jannaschii (strain ATCC 43067 / DSM 2661 / JAL-1 / JCM 10045 / NBRC 100440) (Methanococcus jannaschii).